The chain runs to 442 residues: Chromosomal replication initiator protein DnaA (442 aa).

Residues 1–75 (MDAWPRCLER…GNGEVALAVG (75 aa)) form a domain I, interacts with DnaA modulators region. The interval 75-104 (GSRPRAPEPLPAPQAVASAPAAAPIVPFAG) is domain II. A domain III, AAA+ region region spans residues 105-322 (NLDSHYTFAN…GALNTLVARA (218 aa)). ATP contacts are provided by Gly-150, Gly-152, Lys-153, and Thr-154. The tract at residues 323-442 (NFTGRSITVE…WEKLIRKLSE (120 aa)) is domain IV, binds dsDNA.

The protein belongs to the DnaA family. Oligomerizes as a right-handed, spiral filament on DNA at oriC.

Its subcellular location is the cytoplasm. Plays an essential role in the initiation and regulation of chromosomal replication. ATP-DnaA binds to the origin of replication (oriC) to initiate formation of the DNA replication initiation complex once per cell cycle. Binds the DnaA box (a 9 base pair repeat at the origin) and separates the double-stranded (ds)DNA. Forms a right-handed helical filament on oriC DNA; dsDNA binds to the exterior of the filament while single-stranded (ss)DNA is stabiized in the filament's interior. The ATP-DnaA-oriC complex binds and stabilizes one strand of the AT-rich DNA unwinding element (DUE), permitting loading of DNA polymerase. After initiation quickly degrades to an ADP-DnaA complex that is not apt for DNA replication. Binds acidic phospholipids. This is Chromosomal replication initiator protein DnaA from Xanthomonas campestris pv. campestris (strain 8004).